Consider the following 237-residue polypeptide: Redox-sensing transcriptional repressor Rex (237 aa).

Residues L45–I84 constitute a DNA-binding region (H-T-H motif). An NAD(+)-binding site is contributed by G119–G124.

This sequence belongs to the transcriptional regulatory Rex family. Homodimer.

The protein resides in the cytoplasm. Modulates transcription in response to changes in cellular NADH/NAD(+) redox state. This Rhodopirellula baltica (strain DSM 10527 / NCIMB 13988 / SH1) protein is Redox-sensing transcriptional repressor Rex.